A 461-amino-acid polypeptide reads, in one-letter code: Transcription factor SOX-10 (461 aa).

Disordered stretches follow at residues 1-60 (MADD…ADDD), 154-191 (LRMQHKKDHPDYKYQPRRRKNGKATQGEGEGQVEGEAG), 205-268 (LDHR…DFGN), 350-369 (KAQVKTEGSAPGGHYTDQPS), and 433-461 (AISDPAPSVPQSHSPTHWEQPVYTTLSRP). The span at 30 to 42 (ASDNSSHLASSGN) shows a compositional bias: polar residues. A dimerization (DIM) region spans residues 56–96 (EADDDKFPVCIREAVSQVLSGYDWTLVPMPVRVNGSNKSKP). The HMG box DNA-binding region spans 98-166 (VKRPMNAFMV…QHKKDHPDYK (69 aa)). A compositionally biased stretch (basic and acidic residues) spans 154 to 167 (LRMQHKKDHPDYKY). Residues 181-191 (EGEGQVEGEAG) are compositionally biased toward gly residues. The segment at 221–306 (PEHSSGQSHG…NGHAGHPGHV (86 aa)) is transactivation domain (TAM). Basic and acidic residues predominate over residues 247-264 (ADSKREGRSLGEGGKPHI). The tract at residues 350 to 461 (KAQVKTEGSA…QPVYTTLSRP (112 aa)) is transactivation domain (TAC). Over residues 441–461 (VPQSHSPTHWEQPVYTTLSRP) the composition is skewed to polar residues.

It localises to the cytoplasm. The protein resides in the nucleus. In terms of biological role, transcription factor that plays a central role in developing and mature glia. Specifically activates expression of myelin genes, during oligodendrocyte (OL) maturation, thereby playing a central role in oligodendrocyte maturation and CNS myelination. The sequence is that of Transcription factor SOX-10 (SOX10) from Gallus gallus (Chicken).